We begin with the raw amino-acid sequence, 196 residues long: ATP-dependent Clp protease proteolytic subunit (196 aa).

S98 acts as the Nucleophile in catalysis. H123 is an active-site residue.

It belongs to the peptidase S14 family. Fourteen ClpP subunits assemble into 2 heptameric rings which stack back to back to give a disk-like structure with a central cavity, resembling the structure of eukaryotic proteasomes.

Its subcellular location is the cytoplasm. It carries out the reaction Hydrolysis of proteins to small peptides in the presence of ATP and magnesium. alpha-casein is the usual test substrate. In the absence of ATP, only oligopeptides shorter than five residues are hydrolyzed (such as succinyl-Leu-Tyr-|-NHMec, and Leu-Tyr-Leu-|-Tyr-Trp, in which cleavage of the -Tyr-|-Leu- and -Tyr-|-Trp bonds also occurs).. Functionally, cleaves peptides in various proteins in a process that requires ATP hydrolysis. Has a chymotrypsin-like activity. Plays a major role in the degradation of misfolded proteins. The chain is ATP-dependent Clp protease proteolytic subunit from Sulfurimonas denitrificans (strain ATCC 33889 / DSM 1251) (Thiomicrospira denitrificans (strain ATCC 33889 / DSM 1251)).